The following is a 226-amino-acid chain: Isoprenyl transferase (226 aa).

Aspartate 12 is an active-site residue. Aspartate 12 lines the Mg(2+) pocket. Residues 13–16, tryptophan 17, lysine 25, histidine 29, and 57–59 each bind substrate; these read GNAR and SSE. Residue asparagine 60 is the Proton acceptor of the active site. Residues tryptophan 61, arginine 63, arginine 174, and 180-182 each bind substrate; that span reads RIS. Glutamate 193 provides a ligand contact to Mg(2+).

It belongs to the UPP synthase family. Homodimer. Mg(2+) serves as cofactor.

Catalyzes the condensation of isopentenyl diphosphate (IPP) with allylic pyrophosphates generating different type of terpenoids. This chain is Isoprenyl transferase, found in Rickettsia typhi (strain ATCC VR-144 / Wilmington).